A 61-amino-acid polypeptide reads, in one-letter code: Small ribosomal subunit protein uS14 (61 aa).

4 residues coordinate Zn(2+): cysteine 24, cysteine 27, cysteine 40, and cysteine 43.

Belongs to the universal ribosomal protein uS14 family. Zinc-binding uS14 subfamily. As to quaternary structure, part of the 30S ribosomal subunit. Contacts proteins S3 and S10. Requires Zn(2+) as cofactor.

Binds 16S rRNA, required for the assembly of 30S particles and may also be responsible for determining the conformation of the 16S rRNA at the A site. The chain is Small ribosomal subunit protein uS14 from Kosmotoga olearia (strain ATCC BAA-1733 / DSM 21960 / TBF 19.5.1).